The primary structure comprises 609 residues: MESSVNGVDSLSEVQNSVSGVHHHDPLPSGTPQPSRPPLRASRNYDGGHQTKAIHHHNSHVINQKHSHQEGKTLKQEGLPTKLSSKQPPLDDSKGCEPNGVLESEKKRVVDNHGKNYSQPDATFCASPQNSFYSATVYSEAKESFTNTEVSECASVDKSCESEVANSSDFNESRKTSICRASTGSDASDESSTSSLSSVLYKPHKANDIRWEAIQAVRTRDGMLEMRHFRLLKKLGCGDIGSVYLAELSGTRTSFAMKVMNKTELANRKKLLRAQTEREILQSLDHPFLPTLYTHFETEIFSCLVMEFCPGGDLHALRQRQPGKYFSEHAVRFYVAEVLLSLEYLHMLGIIYRDLKPENVLVREDGHIMLSDFDLSLRCSVSPTLVKSSNNLQTKSSGYCVQPSCIEPTCVMQPDCIKPSCFTPRFLSGKSKKDKKSKPKNDMHNQVTPLPELIAEPTNARSMSFVGTHEYLAPEIIKGEGHGSAVDWWTFGIFLYELLFGRTPFKGSANRATLFNVIGQPLRFPESPTVSFAARDLIRGLLVKEPQHRLAYRRGATEIKQHPFFQNVNWALIRCATPPEVPRQVINLPQTEKDLGVKPSGNYLDIDFF.

Residues 1–19 show a composition bias toward polar residues; sequence MESSVNGVDSLSEVQNSVS. Disordered stretches follow at residues 1-51 and 80-100; these read MESS…GHQT and PTKL…EPNG. In terms of domain architecture, Protein kinase spans 229–565; that stretch reads FRLLKKLGCG…ATEIKQHPFF (337 aa). Residues 235-243 and K258 each bind ATP; that span reads LGCGDIGSV. Residue D354 is the Proton acceptor of the active site. The tract at residues 429-448 is disordered; it reads GKSKKDKKSKPKNDMHNQVT.

This sequence belongs to the protein kinase superfamily. Ser/Thr protein kinase family.

The enzyme catalyses L-seryl-[protein] + ATP = O-phospho-L-seryl-[protein] + ADP + H(+). It catalyses the reaction L-threonyl-[protein] + ATP = O-phospho-L-threonyl-[protein] + ADP + H(+). The chain is Protein kinase PVPK-1 from Phaseolus vulgaris (Kidney bean).